We begin with the raw amino-acid sequence, 203 residues long: NAD(P)H-quinone oxidoreductase subunit M, chloroplastic (203 aa).

Residues 1–21 constitute a chloroplast transit peptide; it reads MAASSSYMACAKFSMLGWLGG. Positions 34–48 are enriched in low complexity; it reads SPQEQAEVQESQEVN. Positions 34–61 are disordered; it reads SPQEQAEVQESQEVNAQEEEKVKQPVQP.

This sequence belongs to the NDH complex subunit M family. Part of the chloroplast NDH complex, composed of a mixture of chloroplast and nucleus encoded subunits. Component of the NDH subcomplex A, at least composed of ndhH, ndhI, ndhJ, ndhK, ndhL, ndhM, ndhN and ndhO.

It localises to the plastid. The protein resides in the chloroplast thylakoid membrane. The catalysed reaction is a plastoquinone + NADH + (n+1) H(+)(in) = a plastoquinol + NAD(+) + n H(+)(out). It carries out the reaction a plastoquinone + NADPH + (n+1) H(+)(in) = a plastoquinol + NADP(+) + n H(+)(out). Functionally, NDH shuttles electrons from NAD(P)H:plastoquinone, via FMN and iron-sulfur (Fe-S) centers, to quinones in the photosynthetic chain and possibly in a chloroplast respiratory chain. The immediate electron acceptor for the enzyme in this species is believed to be plastoquinone. Couples the redox reaction to proton translocation, and thus conserves the redox energy in a proton gradient. The polypeptide is NAD(P)H-quinone oxidoreductase subunit M, chloroplastic (Populus jackii (Balm of Gilead)).